The primary structure comprises 472 residues: 2-oxoglutarate carboxylase small subunit (472 aa).

The 445-residue stretch at 1 to 445 (MFKKVLVANR…TTRYLEEHPH (445 aa)) folds into the Biotin carboxylation domain. 2 residues coordinate ATP: K115 and E199. Residues 119–316 (KEVMKRAGVP…IVKWQIRIAA (198 aa)) form the ATP-grasp domain. Residue R291 is part of the active site.

As to quaternary structure, heterohexadecamer of 8 large subunits and 8 small subunits. Requires Mg(2+) as cofactor. The cofactor is Mn(2+). Co(2+) serves as cofactor.

It carries out the reaction hydrogencarbonate + 2-oxoglutarate + ATP = (S)-oxalosuccinate + ADP + phosphate + H(+). The sequence is that of 2-oxoglutarate carboxylase small subunit from Hydrogenobacter thermophilus (strain DSM 6534 / IAM 12695 / TK-6).